Consider the following 230-residue polypeptide: Peptidyl-prolyl cis-trans isomerase FKBP16-4, chloroplastic (230 aa).

A chloroplast-targeting transit peptide spans 1–56; sequence MILTMKLVHPLHHSLSSSIPFPSRKRQSKPYRCSLPSPGCEKVIRTETVLPPAPVS. In terms of domain architecture, PPIase FKBP-type spans 123-217; that stretch reads GSRVAVHYVA…ELDIELLSIK (95 aa).

The protein belongs to the FKBP-type PPIase family.

It localises to the plastid. It is found in the chloroplast thylakoid lumen. The catalysed reaction is [protein]-peptidylproline (omega=180) = [protein]-peptidylproline (omega=0). In terms of biological role, PPIases accelerate the folding of proteins. It catalyzes the cis-trans isomerization of proline imidic peptide bonds in oligopeptides. The chain is Peptidyl-prolyl cis-trans isomerase FKBP16-4, chloroplastic (FKBP16-4) from Arabidopsis thaliana (Mouse-ear cress).